Reading from the N-terminus, the 926-residue chain is DNA mismatch repair protein MutS (926 aa).

The segment at 1–67 (MAASPNPLQG…NPNQINDLDQ (67 aa)) is disordered. Composition is skewed to polar residues over residues 18–44 (QSTT…QLKS) and 57–67 (KNPNQINDLDQ). Residue 726-733 (GPNASGKS) coordinates ATP.

It belongs to the DNA mismatch repair MutS family.

Its function is as follows. This protein is involved in the repair of mismatches in DNA. It is possible that it carries out the mismatch recognition step. This protein has a weak ATPase activity. This is DNA mismatch repair protein MutS from Prochlorococcus marinus (strain NATL1A).